The primary structure comprises 111 residues: Ribosome-binding factor A (111 aa).

This sequence belongs to the RbfA family. In terms of assembly, monomer. Binds 30S ribosomal subunits, but not 50S ribosomal subunits or 70S ribosomes.

Its subcellular location is the cytoplasm. One of several proteins that assist in the late maturation steps of the functional core of the 30S ribosomal subunit. Associates with free 30S ribosomal subunits (but not with 30S subunits that are part of 70S ribosomes or polysomes). Required for efficient processing of 16S rRNA. May interact with the 5'-terminal helix region of 16S rRNA. The polypeptide is Ribosome-binding factor A (Helicobacter pylori (strain Shi470)).